The primary structure comprises 367 residues: Epoxide hydrolase 3 (367 aa).

A helical transmembrane segment spans residues A22 to I42. Catalysis depends on D180, which acts as the Nucleophile. Y288 (proton donor) is an active-site residue. H344 serves as the catalytic Proton acceptor.

This sequence belongs to the AB hydrolase superfamily. Epoxide hydrolase family. As to expression, predominantly expressed in skin, esophagus, lung and tongue and to a lesser extent in pancreas and eye.

The protein resides in the microsome membrane. The catalysed reaction is an epoxide + H2O = an ethanediol. The enzyme catalyses 9,10-epoxyoctadecanoate + H2O = 9,10-dihydroxyoctadecanoate. It catalyses the reaction 9,10-epoxy-(12Z)-octadecenoate + H2O = 9,10-dihydroxy-(12Z)-octadecenoate. It carries out the reaction 8,9-epoxy-(5Z,11Z,14Z)-eicosatrienoate + H2O = 8,9-dihydroxy-(5Z,11Z,14Z)-eicosatrienoate. The catalysed reaction is 11,12-epoxy-(5Z,8Z,14Z)-eicosatrienoate + H2O = 11,12-dihydroxy-(5Z,8Z,14Z)-eicosatrienoate. The enzyme catalyses 14,15-epoxy-(5Z,8Z,11Z)-eicosatrienoate + H2O = 14,15-dihydroxy-(5Z,8Z,11Z)-eicosatrienoate. Inhibited by 1-(1-acetylpiperidin-4-yl)-3-(4-(trifl uoromethoxy)phenyl)urea (TPAU), 1-cyclohexyl-3-dodecylurea (CDU), 12-(3-adamantan-1-yl-ureido)-dodecanoic acid (AUDA), 1-((3S, 5S, 7S)-adamantan-1-yl)-3-(5-(2-(2-ethoxyethoxy) ethoxy)pentyl)urea (AEPU) and to a lesser extent by 8-(3-((3S, 5S, 7S)-adamantan-1-yl)ureido) octanoic acid (AUOA). Catalyzes the hydrolysis of epoxide-containing fatty acids. Active in vitro against epoxyeicosatrienoic acids (EETs) including 8,9-EET, 9,10-EET, 11,12-EET and 14,15-EET and leukotoxin. The polypeptide is Epoxide hydrolase 3 (Ephx3) (Mus musculus (Mouse)).